A 207-amino-acid polypeptide reads, in one-letter code: Large ribosomal subunit protein uL4 (207 aa).

The protein belongs to the universal ribosomal protein uL4 family. In terms of assembly, part of the 50S ribosomal subunit.

One of the primary rRNA binding proteins, this protein initially binds near the 5'-end of the 23S rRNA. It is important during the early stages of 50S assembly. It makes multiple contacts with different domains of the 23S rRNA in the assembled 50S subunit and ribosome. In terms of biological role, forms part of the polypeptide exit tunnel. The sequence is that of Large ribosomal subunit protein uL4 from Geobacter sulfurreducens (strain ATCC 51573 / DSM 12127 / PCA).